The sequence spans 542 residues: Bifunctional pantoate ligase/cytidylate kinase (542 aa).

The interval 1–280 is pantoate--beta-alanine ligase; that stretch reads MHWLRTVAAL…VGQTRLIDNL (280 aa). 28–35 provides a ligand contact to ATP; that stretch reads MGSLHEGH. Residue His35 is the Proton donor of the active site. Gln59 serves as a coordination point for (R)-pantoate. Gln59 lines the beta-alanine pocket. An ATP-binding site is contributed by 150-153; that stretch reads GQKD. Gln156 contacts (R)-pantoate. ATP contacts are provided by residues Val179 and 187–190; that span reads CSSR. The segment at 281–542 is cytidylate kinase; the sequence is LLSPEQGDPL…ERSGPARLDQ (262 aa). A disordered region spans residues 287–311; the sequence is GDPLPERVQHAAPPSSGTTSPPRRP.

This sequence in the N-terminal section; belongs to the pantothenate synthetase family. The protein in the C-terminal section; belongs to the cytidylate kinase family. Type 1 subfamily.

The protein localises to the cytoplasm. The enzyme catalyses (R)-pantoate + beta-alanine + ATP = (R)-pantothenate + AMP + diphosphate + H(+). It catalyses the reaction CMP + ATP = CDP + ADP. It carries out the reaction dCMP + ATP = dCDP + ADP. It functions in the pathway cofactor biosynthesis; (R)-pantothenate biosynthesis; (R)-pantothenate from (R)-pantoate and beta-alanine: step 1/1. Its function is as follows. Catalyzes the condensation of pantoate with beta-alanine in an ATP-dependent reaction via a pantoyl-adenylate intermediate. In terms of biological role, catalyzes the transfer of a phosphate group from ATP to either CMP or dCMP to form CDP or dCDP and ADP, respectively. The protein is Bifunctional pantoate ligase/cytidylate kinase of Synechococcus sp. (strain JA-2-3B'a(2-13)) (Cyanobacteria bacterium Yellowstone B-Prime).